A 601-amino-acid chain; its full sequence is Uptake hydrogenase large subunit (601 aa).

Residues Cys74, Cys77, Cys580, and Cys583 each coordinate Ni(2+).

The protein belongs to the [NiFe]/[NiFeSe] hydrogenase large subunit family. Heterodimer of a large and a small subunit. Ni(2+) serves as cofactor.

The protein localises to the cell membrane. It carries out the reaction H2 + A = AH2. This enzyme recycles the H(2) produced by nitrogenase to increase the production of ATP and to protect nitrogenase against inhibition or damage by O(2) under carbon- or phosphate-limited conditions. This Azotobacter chroococcum mcd 1 protein is Uptake hydrogenase large subunit (hupL).